The primary structure comprises 380 residues: Shaggy-related protein kinase eta (380 aa).

The 285-residue stretch at 40 to 324 (YMAERVVGTG…ALEACAHPFF (285 aa)) folds into the Protein kinase domain. ATP-binding positions include 46 to 54 (VGTGSFGIV) and Lys69. Thr104 bears the Phosphothreonine mark. Phosphoserine is present on Ser105. Asp165 (proton acceptor) is an active-site residue. The residue at position 187 (Ser187) is a Phosphoserine. Tyr200 is modified (phosphotyrosine). Phosphothreonine is present on residues Thr220 and Thr261. A Phosphoserine modification is found at Ser310. A Phosphothreonine modification is found at Thr314. Ser353 carries the phosphoserine modification.

It belongs to the protein kinase superfamily. CMGC Ser/Thr protein kinase family. GSK-3 subfamily. In terms of assembly, interacts in vitro with the C-terminal fragment of BZR1 and with BES1/BZR2, but not through the kinase domain. Interacts with BHLH150, beet curly top virus AL4/C4 and tomato golden mosaic virus AL4/AC4. Interacts with YDA. Interacts with MKK4. Interacts with KIB1 and KIB2 in a brassinosteroid (BR)-dependent manner. Interacts with BSK1, BSK6, BSK8 and BSK11. Binds to WRKY46, WRKY54 and WRKY70. Component of a complex made of POLAR, BASL, ASK7/BIN2 and ASK3/SK12. Binds to POLAR and BASL. Post-translationally, autophosphorylated mainly on threonine and serine residues. In terms of processing, ubiquitination and subsequent proteasomal degradation mediated by KIB1. In terms of tissue distribution, in the two outer cell layers of the developing seed coat and restricted to the suspensor cells in developing embryos. Mostly expressed in stomatal lineage cells with asymmetric cell division (ACD) potential. Observed in small cells of non-protruding hypocotyl cell files and of developing cotyledon epidermis.

The protein localises to the cytoplasm. It is found in the cell cortex. It localises to the nucleus. Its subcellular location is the cell membrane. The enzyme catalyses L-seryl-[protein] + ATP = O-phospho-L-seryl-[protein] + ADP + H(+). The catalysed reaction is L-threonyl-[protein] + ATP = O-phospho-L-threonyl-[protein] + ADP + H(+). Inactivated by an unknown mechanism after binding of brassinosteroids to the brassinosteroid receptor complex. Inhibited by lithium. Inhibited by dephosphorylation at Tyr-200 by BSU1. Competitive inhibition by KIB1 that reduces substrate (e.g. BZR1) access. Repressed by bikinin. Functionally, negative regulator in brassinosteroid signal transduction pathway important for plant growth. May be also involved in auxin signaling pathway. Phosphorylates and increases the degradation of BZR1 and BZR2/BES1 by the proteasome. Phosphorylates BHLH150, beet curly top virus C4 and tomato golden mosaic virus AC4 on threonine and serine residues. Upon brassinosteroid signaling, inhibits stomatal development by phosphorylating and inhibiting the MAPKK kinase YDA and the MAPK kinases MKK4 and MKK5. Phosphorylates BSK1, BSK3, BSK5, BSK6, BSK8 and BSK11 in vitro. Phoyphorylates and destabilizes WRKY46, WRKY54 and WRKY70. Mediates BASL nuclear exclusion; kinase activity is required for this function. Required first at the cortical polarity site, to restrict MAPK signaling and promote asymmetric cell division (ACD), and second in the nucleus of stomatal lineage ground cells (SLGCs) or meristemoids, to limit cell division and to promote differentiation into pavement or stomatal guard cells, respectively, likely by initiating BASL polarization. Phosphorylates BASL, YDA and SPCH in vitro and POLAR in vivo. Phosphorylates and inhibits SPCH in the nucleus of SLGC undergoing ACD, thus negatively regulating stomatal development. The sequence is that of Shaggy-related protein kinase eta from Arabidopsis thaliana (Mouse-ear cress).